Here is a 408-residue protein sequence, read N- to C-terminus: Multifunctional CCA protein (408 aa).

2 residues coordinate ATP: G8 and R11. Residues G8 and R11 each contribute to the CTP site. Residues D21 and D23 each coordinate Mg(2+). ATP is bound by residues R91, R137, and R140. CTP is bound by residues R91, R137, and R140. The region spanning 228 to 329 (TGVHVLSVLE…LELLQSFDVY (102 aa)) is the HD domain.

It belongs to the tRNA nucleotidyltransferase/poly(A) polymerase family. Bacterial CCA-adding enzyme type 1 subfamily. In terms of assembly, monomer. Can also form homodimers and oligomers. The cofactor is Mg(2+). Ni(2+) serves as cofactor.

It catalyses the reaction a tRNA precursor + 2 CTP + ATP = a tRNA with a 3' CCA end + 3 diphosphate. It carries out the reaction a tRNA with a 3' CCA end + 2 CTP + ATP = a tRNA with a 3' CCACCA end + 3 diphosphate. Catalyzes the addition and repair of the essential 3'-terminal CCA sequence in tRNAs without using a nucleic acid template. Adds these three nucleotides in the order of C, C, and A to the tRNA nucleotide-73, using CTP and ATP as substrates and producing inorganic pyrophosphate. tRNA 3'-terminal CCA addition is required both for tRNA processing and repair. Also involved in tRNA surveillance by mediating tandem CCA addition to generate a CCACCA at the 3' terminus of unstable tRNAs. While stable tRNAs receive only 3'-terminal CCA, unstable tRNAs are marked with CCACCA and rapidly degraded. The protein is Multifunctional CCA protein of Pseudomonas syringae pv. syringae (strain B728a).